Consider the following 209-residue polypeptide: MIDNNILVKGNKEGINIVININKFKDFEEMLEALVKRLSVGKMFYKGCNLKIITDLKNINEKQSVRLKQVLFEKFLIKDCIFEDSNEKPSKIFSGIYEGRTKFLRKTIRGGQVVNYPGNIVIIGDVNAGSEIYVGGNIVVFGALRGYAHAGFGGNSKAIVAAISLEPEMLQIADLVTRSPDNMKPQYPEVAKIRGNIIIVEPYLPNKFI.

Belongs to the MinC family. As to quaternary structure, interacts with MinD and FtsZ.

Cell division inhibitor that blocks the formation of polar Z ring septums. Rapidly oscillates between the poles of the cell to destabilize FtsZ filaments that have formed before they mature into polar Z rings. Prevents FtsZ polymerization. The protein is Probable septum site-determining protein MinC of Clostridium kluyveri (strain NBRC 12016).